Consider the following 424-residue polypeptide: Enolase (424 aa).

(2R)-2-phosphoglycerate is bound at residue Gln-163. Glu-204 acts as the Proton donor in catalysis. Mg(2+) contacts are provided by Asp-241, Glu-284, and Asp-311. Positions 336, 365, 366, and 387 each coordinate (2R)-2-phosphoglycerate. Lys-336 serves as the catalytic Proton acceptor.

This sequence belongs to the enolase family. Mg(2+) is required as a cofactor.

It localises to the cytoplasm. Its subcellular location is the secreted. The protein localises to the cell surface. It catalyses the reaction (2R)-2-phosphoglycerate = phosphoenolpyruvate + H2O. The protein operates within carbohydrate degradation; glycolysis; pyruvate from D-glyceraldehyde 3-phosphate: step 4/5. Catalyzes the reversible conversion of 2-phosphoglycerate (2-PG) into phosphoenolpyruvate (PEP). It is essential for the degradation of carbohydrates via glycolysis. This is Enolase from Dictyoglomus thermophilum (strain ATCC 35947 / DSM 3960 / H-6-12).